We begin with the raw amino-acid sequence, 599 residues long: Sulfite reductase [NADPH] flavoprotein alpha-component (599 aa).

Positions 64 to 202 (VTLISASQTG…AASEWRARVV (139 aa)) constitute a Flavodoxin-like domain. FMN-binding positions include 70–75 (SQTGNA), 117–120 (STQG), and 153–162 (LGDTSYEFFC). The region spanning 234–448 (DAPLIATLSV…IEHNDNFRLP (215 aa)) is the FAD-binding FR-type domain. Residues Thr322, Ala356, 386–389 (RLYS), 404–406 (TVG), Tyr410, and 419–422 (GGAS) each bind FAD. NADP(+) is bound by residues 519-520 (SR), 525-529 (KIYVQ), and Asp561. Position 599 (Tyr599) interacts with FAD.

Belongs to the NADPH-dependent sulphite reductase flavoprotein subunit CysJ family. This sequence in the N-terminal section; belongs to the flavodoxin family. The protein in the C-terminal section; belongs to the flavoprotein pyridine nucleotide cytochrome reductase family. Alpha(8)-beta(8). The alpha component is a flavoprotein, the beta component is a hemoprotein. It depends on FAD as a cofactor. FMN is required as a cofactor.

It carries out the reaction hydrogen sulfide + 3 NADP(+) + 3 H2O = sulfite + 3 NADPH + 4 H(+). It functions in the pathway sulfur metabolism; hydrogen sulfide biosynthesis; hydrogen sulfide from sulfite (NADPH route): step 1/1. Functionally, component of the sulfite reductase complex that catalyzes the 6-electron reduction of sulfite to sulfide. This is one of several activities required for the biosynthesis of L-cysteine from sulfate. The flavoprotein component catalyzes the electron flow from NADPH -&gt; FAD -&gt; FMN to the hemoprotein component. The sequence is that of Sulfite reductase [NADPH] flavoprotein alpha-component from Salmonella typhimurium (strain LT2 / SGSC1412 / ATCC 700720).